Here is a 1436-residue protein sequence, read N- to C-terminus: Probable ATP-dependent RNA helicase spindle-E (1436 aa).

One can recognise a Helicase ATP-binding domain in the interval 124–291 (LAAINANPVV…FTTTNSIPPV (168 aa)). 137-144 (GETGCGKT) lines the ATP pocket. A DEAH box motif is present at residues 237-240 (DEVH). In terms of domain architecture, Helicase C-terminal spans 337-524 (KIIMVIDNME…NSVLRAKELE (188 aa)). Positions 940-1003 (ACDISKGMMV…RFMSEELIQQ (64 aa)) constitute a Tudor domain.

It belongs to the DEAD box helicase family. DEAH subfamily.

The protein resides in the cytoplasm. It carries out the reaction ATP + H2O = ADP + phosphate + H(+). Functionally, probable ATP-binding RNA helicase which plays a central role during spermatogenesis and oogenesis by repressing transposable elements and preventing their mobilization, which is essential for the germline integrity. Acts via the piRNA metabolic process, which mediates the repression of transposable elements during meiosis by forming complexes composed of piRNAs and Piwi and govern the methylation and subsequent repression of transposons. Involved in the repression of LTR retrotransposon copia. Also involved in telomere regulation by repressing specialized telomeric retroelements HeT-A, TAHRE, and TART; Drosophila telomeres being maintained by transposition of specialized telomeric retroelements. Involved in telomeric trans-silencing, a repression mechanism by which a transposon or a transgene inserted in subtelomeric heterochromatin has the capacity to repress in trans in the female germline, a homologous transposon, or transgene located in euchromatin. Involved in the repression of testis-expressed Stellate genes by the homologous Su(Ste) repeats. Required for anteroposterior and dorsoventral axis formation during oogenesis. In Drosophila yakuba (Fruit fly), this protein is Probable ATP-dependent RNA helicase spindle-E (spn-E).